The primary structure comprises 540 residues: Probable G-protein coupled receptor 75 (540 aa).

The span at 1–15 shows a compositional bias: polar residues; that stretch reads MNSTGHLQDAPNATS. Residues 1–27 form a disordered region; the sequence is MNSTGHLQDAPNATSLHVPHSQEGNST. Over 1-46 the chain is Extracellular; it reads MNSTGHLQDAPNATSLHVPHSQEGNSTSLQEGLQDLIHTATLVTCT. 3 N-linked (GlcNAc...) asparagine glycosylation sites follow: N2, N12, and N25. Residues 47–67 form a helical membrane-spanning segment; that stretch reads FLLAVIFCLGSYGNFIVFLSF. Topologically, residues 68 to 86 are cytoplasmic; it reads FDPAFRKFRTNFDFMILNL. Residues 87–107 form a helical membrane-spanning segment; sequence SFCDLFICGVTAPMFTFVLFF. At 108 to 120 the chain is on the extracellular side; that stretch reads SSASSIPDAFCFT. The helical transmembrane segment at 121 to 141 threads the bilayer; it reads FHLTSSGFIIMSLKTVAVIAL. Over 142–160 the chain is Cytoplasmic; that stretch reads HRLRMVLGKQPNRTASFPC. A helical transmembrane segment spans residues 161 to 181; the sequence is TVLLTLLLWATSFTLATLATL. Residues 182–205 are Extracellular-facing; that stretch reads KTSKSHLCLPMSSLIAGKGKAILS. A helical membrane pass occupies residues 206-226; that stretch reads LYVVDFTFCVAVVSVSYIMIA. Topologically, residues 227–318 are cytoplasmic; sequence QTLRKNAQVR…INLSTAKDSK (92 aa). A helical membrane pass occupies residues 319-339; the sequence is AVVTCVIIVLSVLVCCLPLGI. The Extracellular portion of the chain corresponds to 340–350; that stretch reads SLVQVVLSSNG. Residues 351-371 traverse the membrane as a helical segment; that stretch reads SFILYQFELFGFTLIFFKSGL. Topologically, residues 372–540 are cytoplasmic; the sequence is NPFIYSRNSA…SAKQIPVPSV (169 aa).

This sequence belongs to the G-protein coupled receptor 1 family. In terms of tissue distribution, expressed at high levels in brain and spinal cord and at detectable levels in retinal pigment epithelium. In situ hybridization of adult eye sections localized transcripts only to the perivascular cells, surrounding retinal arterioles, in the ganglion cell/nerve fiber layer. Also expressed by islet cells (at protein level).

It localises to the cell membrane. Functionally, g protein-coupled receptor that is activated by the chemokine CCL5/RANTES. Probably coupled to heterotrimeric Gq proteins, it stimulates inositol trisphosphate production and calcium mobilization upon activation. Together with CCL5/RANTES, may play a role in neuron survival through activation of a downstream signaling pathway involving the PI3, Akt and MAP kinases. CCL5/RANTES may also regulate insulin secretion by pancreatic islet cells through activation of this receptor. This Homo sapiens (Human) protein is Probable G-protein coupled receptor 75 (GPR75).